Reading from the N-terminus, the 442-residue chain is MNFFMEKNKDAGHRVTIKIPKTTVNNSLLQEFIKIRKTTKINGFRKGKTPIRVIQEKYGSAIYYDIFKKLMQKFFYEFIKTEKIKIIGSPKFYIHQDEDKKKEYFEYSVIYELYPQFQIKDIKQIKVNKINVEITEEDIKKNIETNKNKKNIWNPVNKAVKSYDRVTINYCIYEKNKKIKKFDKDNISFIVSKNTLIPQLNYKIINHFVNDIIFFKIKFHAFHPEKELQNKDITFKIKIIKIEKKQELESEKSNKKNITEKKTIQTDYQTIKNNLHSQINIITDKYLENQIIQKIVEKNILLLPPLLFQKEIKNLYKQYTKQYQEENSNILEKKYHMSLDSEVKKRLYFQIIIEQIILNNKLFADENNIQKLIKKISSNYKNPMEIIKLYNKNKNLKNTMKNIELERQAMLLLKKSIKIEKQNWNFERFLNYNWASHEELML.

The 86-residue stretch at 163-248 (YDRVTINYCI…IIKIEKKQEL (86 aa)) folds into the PPIase FKBP-type domain.

It belongs to the FKBP-type PPIase family. Tig subfamily.

The protein localises to the cytoplasm. It carries out the reaction [protein]-peptidylproline (omega=180) = [protein]-peptidylproline (omega=0). Functionally, involved in protein export. Acts as a chaperone by maintaining the newly synthesized protein in an open conformation. Functions as a peptidyl-prolyl cis-trans isomerase. The polypeptide is Trigger factor (Buchnera aphidicola subsp. Acyrthosiphon pisum (strain 5A)).